A 127-amino-acid polypeptide reads, in one-letter code: Large ribosomal subunit protein bL12 (127 aa).

The tract at residues 93-127 is disordered; it reads LVDEAPNPVSEGVSREEADDLKAQIEDAGGEVELQ. A compositionally biased stretch (basic and acidic residues) spans 105 to 117; it reads VSREEADDLKAQI.

Belongs to the bacterial ribosomal protein bL12 family. As to quaternary structure, homodimer. Part of the ribosomal stalk of the 50S ribosomal subunit. Forms a multimeric L10(L12)X complex, where L10 forms an elongated spine to which 2 to 4 L12 dimers bind in a sequential fashion. Binds GTP-bound translation factors.

Its function is as follows. Forms part of the ribosomal stalk which helps the ribosome interact with GTP-bound translation factors. Is thus essential for accurate translation. In Salinibacter ruber (strain DSM 13855 / M31), this protein is Large ribosomal subunit protein bL12.